A 265-amino-acid polypeptide reads, in one-letter code: Octanoyltransferase (265 aa).

Positions 35–254 constitute a BPL/LPL catalytic domain; it reads DEVPDTVLLL…HLRDVLENAE (220 aa). Substrate is bound by residues 73 to 80, 184 to 186, and 197 to 199; these read RGGKITWH, AIG, and GFA. Cys215 functions as the Acyl-thioester intermediate in the catalytic mechanism.

This sequence belongs to the LipB family.

Its subcellular location is the cytoplasm. The catalysed reaction is octanoyl-[ACP] + L-lysyl-[protein] = N(6)-octanoyl-L-lysyl-[protein] + holo-[ACP] + H(+). The protein operates within protein modification; protein lipoylation via endogenous pathway; protein N(6)-(lipoyl)lysine from octanoyl-[acyl-carrier-protein]: step 1/2. Functionally, catalyzes the transfer of endogenously produced octanoic acid from octanoyl-acyl-carrier-protein onto the lipoyl domains of lipoate-dependent enzymes. Lipoyl-ACP can also act as a substrate although octanoyl-ACP is likely to be the physiological substrate. The protein is Octanoyltransferase of Streptomyces coelicolor (strain ATCC BAA-471 / A3(2) / M145).